Here is an 83-residue protein sequence, read N- to C-terminus: uncharacterized protein (83 aa).

A helical membrane pass occupies residues I50 to I70.

The protein belongs to the plectrovirus ORF7 family.

It is found in the host membrane. This is an uncharacterized protein from Spiroplasma melliferum (SpV1).